Here is a 232-residue protein sequence, read N- to C-terminus: (S)-2-haloacid dehalogenase (232 aa).

Aspartate 10 acts as the Nucleophile in catalysis. Residues 11-12 (LY), arginine 41, and 118-119 (SN) contribute to the an (S)-2-haloacid site. Residues 175 to 180 (SSNAWD) form an important for catalytic activity region.

Belongs to the HAD-like hydrolase superfamily. S-2-haloalkanoic acid dehalogenase family. In terms of assembly, homodimer.

The catalysed reaction is an (S)-2-haloacid + H2O = a (2R)-2-hydroxycarboxylate + a halide anion + H(+). It catalyses the reaction (S)-2-chloropropanoate + H2O = (R)-lactate + chloride + H(+). In terms of biological role, catalyzes the hydrolytic dehalogenation of small (S)-2-haloalkanoic acids to yield the corresponding (R)-2-hydroxyalkanoic acids. Acts on acids of short chain lengths, C(2) to C(4), with inversion of configuration at C-2. Active with 2-halogenated carboxylic acids and converts only the S-isomer (or L-isomer) of 2-chloropropionic acid with inversion of configuration to produce R-lactate (or D-isomer). In Pseudomonas sp. (strain YL), this protein is (S)-2-haloacid dehalogenase.